The sequence spans 153 residues: MSENKQALQVAALKNGTVIDHIPSEKLFTVVQLLGVEQMKCNITIGFNLDSKKLGKKGIIKIADKFFCDEEINRISVVAPYVKLNIIRDYEVVEKKEVRMPDELHGIVKCANPKCITNNEPMPTLFHVIDKDNCIVKCHYCEKEQKREEITIL.

4 residues coordinate Zn(2+): C110, C115, C138, and C141.

It belongs to the PyrI family. Contains catalytic and regulatory chains. Zn(2+) serves as cofactor.

Its function is as follows. Involved in allosteric regulation of aspartate carbamoyltransferase. This is Aspartate carbamoyltransferase regulatory chain from Bacteroides thetaiotaomicron (strain ATCC 29148 / DSM 2079 / JCM 5827 / CCUG 10774 / NCTC 10582 / VPI-5482 / E50).